The chain runs to 453 residues: UDP-N-acetylmuramoylalanine--D-glutamate ligase (453 aa).

119–125 (GTNGKTT) serves as a coordination point for ATP.

This sequence belongs to the MurCDEF family.

The protein localises to the cytoplasm. The enzyme catalyses UDP-N-acetyl-alpha-D-muramoyl-L-alanine + D-glutamate + ATP = UDP-N-acetyl-alpha-D-muramoyl-L-alanyl-D-glutamate + ADP + phosphate + H(+). It functions in the pathway cell wall biogenesis; peptidoglycan biosynthesis. In terms of biological role, cell wall formation. Catalyzes the addition of glutamate to the nucleotide precursor UDP-N-acetylmuramoyl-L-alanine (UMA). This Syntrophus aciditrophicus (strain SB) protein is UDP-N-acetylmuramoylalanine--D-glutamate ligase.